Consider the following 367-residue polypeptide: Spore wall protein 9 (367 aa).

The first 29 residues, 1-29 (MSTQPTKTSSTKLRIFKWLFIISTLVAIA), serve as a signal peptide directing secretion.

In terms of assembly, interacts with SWP7.

Its subcellular location is the cytoplasm. It localises to the spore wall. It is found in the spore polar tube. In terms of biological role, involved in adherence of spores to the host cell surface and in infection efficiency. This chain is Spore wall protein 9, found in Nosema bombycis (strain CQ1 / CVCC 102059) (Microsporidian parasite).